A 149-amino-acid chain; its full sequence is Protegrin-4 (149 aa).

Residues 1 to 29 form the signal peptide; it reads METQRASLCLGRWSLWLLLLALVVPSASA. A propeptide spanning residues 30–130 is cleaved from the precursor; sequence QALSYREAVL…DITCNEVQGV (101 aa). Residues 61–80 form a disordered region; that stretch reads DQPPKADEDPGTPKPVSFTV. Intrachain disulfides connect cysteine 85–cysteine 96, cysteine 107–cysteine 124, cysteine 136–cysteine 145, and cysteine 138–cysteine 143. Arginine 148 is subject to Arginine amide.

This sequence belongs to the cathelicidin family.

The protein localises to the secreted. Functionally, microbicidal activity. The chain is Protegrin-4 (NPG4) from Sus scrofa (Pig).